The sequence spans 557 residues: MESERSKRMGNACIPLKRIAYFLCLLSALLLTEGKKPAKPKCPAVCTCTKDNALCENARSIPRTVPPDVISLSFVRSGFTEISEGSFLFTPSLQLLLFTSNSFDVISDDAFIGLPHLEYLFIENNNIKSISRHTFRGLKSLIHLSLANNNLQTLPKDIFKGLDSLTNVDLRGNSFNCDCKLKWLVEWLGHTNATVEDIYCEGPPEYKKRKINSLSSKDFDCIITEFAKSQDLPYQSLSIDTFSYLNDEYVVIAQPFTGKCIFLEWDHVEKTFRNYDNITGTSTVVCKPIVIETQLYVIVAQLFGGSHIYKRDSFANKFIKIQDIEILKIRKPNDIETFKIENNWYFVVADSSKAGFTTIYKWNGNGFYSHQSLHAWYRDTDVEYLEIVRTPQTLRTPHLILSSSSQRPVIYQWNKATQSFTNQTDIPNMEDVYAVKHFSVKGDVYICLTRFIGDSKVMKWGGSSFQDIQRMPSRGSMVFQPLQINNYQYAILGSDYSFTQVYNWDAEKAKFVKFQELNVQAPRSFTHVSINKRNFLFASSFKGNTQIYKHVIVDLSA.

The N-terminal stretch at 1-34 is a signal peptide; it reads MESERSKRMGNACIPLKRIAYFLCLLSALLLTEG. The region spanning 35–72 is the LRRNT domain; it reads KKPAKPKCPAVCTCTKDNALCENARSIPRTVPPDVISL. 3 LRR repeats span residues 92-113, 116-137, and 140-161; these read SLQLLLFTSNSFDVISDDAFIG, HLEYLFIENNNIKSISRHTFRG, and SLIHLSLANNNLQTLPKDIFKG. Positions 173 to 223 constitute an LRRCT domain; the sequence is NSFNCDCKLKWLVEWLGHTNATVEDIYCEGPPEYKKRKINSLSSKDFDCII. The N-linked (GlcNAc...) asparagine glycan is linked to Asn192. EAR repeat units follow at residues 225 to 267, 271 to 313, 317 to 364, 366 to 415, 419 to 462, 464 to 506, and 510 to 552; these read EFAK…EWDH, TFRN…KRDS, KFIK…KWNG, GFYS…QWNK, SFTN…KWGG, SFQD…NWDA, and KFVK…KHVI. A glycan (N-linked (GlcNAc...) asparagine) is linked at Asn277. N-linked (GlcNAc...) asparagine glycosylation occurs at Asn422.

As to quaternary structure, oligomer. Interacts with KCNA1 within a complex containing KCNA1, KCNA4 and KCNAB1. Part of a complex containing ADAM22, DLG4/PSD95 and CACNG2 (stargazin). Can bind to ADAM11 and ADAM23. Glycosylated.

The protein resides in the secreted. The protein localises to the synapse. It is found in the cytoplasm. Its function is as follows. Regulates voltage-gated potassium channels assembled from KCNA1, KCNA4 and KCNAB1. It slows down channel inactivation by precluding channel closure mediated by the KCNAB1 subunit. Ligand for ADAM22 that positively regulates synaptic transmission mediated by AMPA-type glutamate receptors. Plays a role in suppressing the production of MMP1/3 through the phosphatidylinositol 3-kinase/ERK pathway. The sequence is that of Leucine-rich glioma-inactivated protein 1 (LGI1) from Pan troglodytes (Chimpanzee).